Reading from the N-terminus, the 136-residue chain is Nucleoside diphosphate kinase (136 aa).

ATP contacts are provided by Lys-10, Phe-58, Arg-86, Thr-92, Arg-104, and Asn-114. The Pros-phosphohistidine intermediate role is filled by His-117.

The protein belongs to the NDK family. In terms of assembly, homotetramer. Requires Mg(2+) as cofactor.

The protein resides in the cytoplasm. The enzyme catalyses a 2'-deoxyribonucleoside 5'-diphosphate + ATP = a 2'-deoxyribonucleoside 5'-triphosphate + ADP. The catalysed reaction is a ribonucleoside 5'-diphosphate + ATP = a ribonucleoside 5'-triphosphate + ADP. Its function is as follows. Major role in the synthesis of nucleoside triphosphates other than ATP. The ATP gamma phosphate is transferred to the NDP beta phosphate via a ping-pong mechanism, using a phosphorylated active-site intermediate. The protein is Nucleoside diphosphate kinase of Mycobacterium sp. (strain MCS).